Reading from the N-terminus, the 208-residue chain is Uracil phosphoribosyltransferase (208 aa).

5-phospho-alpha-D-ribose 1-diphosphate-binding positions include Arg77, Arg102, and 128-136 (DPMLATGGT). Residues Ile191 and 196–198 (GDI) contribute to the uracil site. Position 197 (Asp197) interacts with 5-phospho-alpha-D-ribose 1-diphosphate.

Belongs to the UPRTase family. It depends on Mg(2+) as a cofactor.

The enzyme catalyses UMP + diphosphate = 5-phospho-alpha-D-ribose 1-diphosphate + uracil. It participates in pyrimidine metabolism; UMP biosynthesis via salvage pathway; UMP from uracil: step 1/1. Its activity is regulated as follows. Allosterically activated by GTP. Catalyzes the conversion of uracil and 5-phospho-alpha-D-ribose 1-diphosphate (PRPP) to UMP and diphosphate. This is Uracil phosphoribosyltransferase from Aquifex aeolicus (strain VF5).